The chain runs to 206 residues: Putative archaetidylserine decarboxylase proenzyme (206 aa).

Residue Ser172 is the Schiff-base intermediate with substrate; via pyruvic acid of the active site. Pyruvic acid (Ser); by autocatalysis is present on Ser172.

The protein belongs to the phosphatidylserine decarboxylase family. PSD-A subfamily. As to quaternary structure, heterodimer of a large membrane-associated beta subunit and a small pyruvoyl-containing alpha subunit. Requires pyruvate as cofactor. Post-translationally, is synthesized initially as an inactive proenzyme. Formation of the active enzyme involves a self-maturation process in which the active site pyruvoyl group is generated from an internal serine residue via an autocatalytic post-translational modification. Two non-identical subunits are generated from the proenzyme in this reaction, and the pyruvate is formed at the N-terminus of the alpha chain, which is derived from the carboxyl end of the proenzyme. The post-translation cleavage follows an unusual pathway, termed non-hydrolytic serinolysis, in which the side chain hydroxyl group of the serine supplies its oxygen atom to form the C-terminus of the beta chain, while the remainder of the serine residue undergoes an oxidative deamination to produce ammonia and the pyruvoyl prosthetic group on the alpha chain.

It is found in the cell membrane. The catalysed reaction is archaetidylserine + H(+) = archaetidylethanolamine + CO2. Functionally, catalyzes the formation of archaetidylethanolamine (PtdEtn) from archaetidylserine (PtdSer). This chain is Putative archaetidylserine decarboxylase proenzyme, found in Methanocaldococcus jannaschii (strain ATCC 43067 / DSM 2661 / JAL-1 / JCM 10045 / NBRC 100440) (Methanococcus jannaschii).